The sequence spans 72 residues: uncharacterized protein (72 aa).

Positions 51-72 (AKGGRQRGETVVVDDQCKEHKE) are disordered.

It belongs to the YiiE family.

This is an uncharacterized protein from Escherichia coli O6:K15:H31 (strain 536 / UPEC).